We begin with the raw amino-acid sequence, 683 residues long: Translation initiation factor IF-2 (683 aa).

The tr-type G domain maps to 182–351 (KRPPVVTVMG…ILTAEMEELK (170 aa)). Residues 191–198 (GHVDHGKT) form a G1 region. GTP is bound at residue 191 to 198 (GHVDHGKT). Residues 216–220 (GITQH) form a G2 region. Residues 237-240 (DTPG) form a G3 region. Residues 237 to 241 (DTPGH) and 291 to 294 (NKID) contribute to the GTP site. The tract at residues 291–294 (NKID) is G4. The segment at 327–329 (SAH) is G5.

The protein belongs to the TRAFAC class translation factor GTPase superfamily. Classic translation factor GTPase family. IF-2 subfamily.

It is found in the cytoplasm. Functionally, one of the essential components for the initiation of protein synthesis. Protects formylmethionyl-tRNA from spontaneous hydrolysis and promotes its binding to the 30S ribosomal subunits. Also involved in the hydrolysis of GTP during the formation of the 70S ribosomal complex. The chain is Translation initiation factor IF-2 from Clostridium novyi (strain NT).